Reading from the N-terminus, the 130-residue chain is Acyl carrier protein 2, chloroplastic (130 aa).

A chloroplast-targeting transit peptide spans 1–48; sequence MASITGSSVSFKCAPLQSSFNSKNYALKSSVTFWRRTPVMPRGLSVSC. One can recognise a Carrier domain in the interval 52–127; it reads PEMVTKVSDI…EAADMIEALQ (76 aa). At serine 87 the chain carries O-(pantetheine 4'-phosphoryl)serine.

Belongs to the acyl carrier protein (ACP) family. Post-translationally, 4'-phosphopantetheine is transferred from CoA to a specific serine of apo-ACP by acpS. This modification is essential for activity because fatty acids are bound in thioester linkage to the sulfhydryl of the prosthetic group. In terms of tissue distribution, roots, leaves and seeds.

It localises to the plastid. The protein resides in the chloroplast. It functions in the pathway lipid metabolism; fatty acid biosynthesis. Functionally, carrier of the growing fatty acid chain in fatty acid biosynthesis. In Spinacia oleracea (Spinach), this protein is Acyl carrier protein 2, chloroplastic (ACL1.2).